A 347-amino-acid polypeptide reads, in one-letter code: MTDLPFVTADLPGSGGALRRAPEDFRVDEVPAYLPSGAGPHLYLRVEKRGRTTRDALRELARALGVPERDAGAAGLKDKDAVTTQWLSFPVARDPDPAALAAPGLRVLEVSRHQNKLRTGHVRANRFTLAVRGGDLARARDCAAALAARGLPNFFGPQRFGAAGRNAAVGRALVTGERSPEAGRAARDRFLRRLSLSAYQSLLFNRWLAERMADGRFAAALAGDVMKKLDTGGLFTCEDPATDGPRVERFEISPAGPMFGHALRLAGGEAGAREARLLEAEGIALADFVRGGGEAEGTRRAARLRIDVALEPLEDGYRAAFELPRGAYATVVMRELTKADAELPEED.

The active-site Nucleophile is the Asp78. One can recognise a TRUD domain in the interval Gly150–Leu304.

The protein belongs to the pseudouridine synthase TruD family.

The enzyme catalyses uridine(13) in tRNA = pseudouridine(13) in tRNA. Responsible for synthesis of pseudouridine from uracil-13 in transfer RNAs. This chain is tRNA pseudouridine synthase D, found in Anaeromyxobacter dehalogenans (strain 2CP-C).